Here is a 480-residue protein sequence, read N- to C-terminus: Aspartyl/glutamyl-tRNA(Asn/Gln) amidotransferase subunit B (480 aa).

This sequence belongs to the GatB/GatE family. GatB subfamily. As to quaternary structure, heterotrimer of A, B and C subunits.

The catalysed reaction is L-glutamyl-tRNA(Gln) + L-glutamine + ATP + H2O = L-glutaminyl-tRNA(Gln) + L-glutamate + ADP + phosphate + H(+). The enzyme catalyses L-aspartyl-tRNA(Asn) + L-glutamine + ATP + H2O = L-asparaginyl-tRNA(Asn) + L-glutamate + ADP + phosphate + 2 H(+). Functionally, allows the formation of correctly charged Asn-tRNA(Asn) or Gln-tRNA(Gln) through the transamidation of misacylated Asp-tRNA(Asn) or Glu-tRNA(Gln) in organisms which lack either or both of asparaginyl-tRNA or glutaminyl-tRNA synthetases. The reaction takes place in the presence of glutamine and ATP through an activated phospho-Asp-tRNA(Asn) or phospho-Glu-tRNA(Gln). This Hahella chejuensis (strain KCTC 2396) protein is Aspartyl/glutamyl-tRNA(Asn/Gln) amidotransferase subunit B.